The following is a 231-amino-acid chain: Histone H1 (231 aa).

Positions 1 to 17 (MSDPAIEVAPVPVASPA) are enriched in low complexity. 2 disordered regions span residues 1–44 (MSDP…PVSD) and 124–231 (TKKV…AKKA). The region spanning 38 to 112 (THPPVSDMIV…GASGSFKLPA (75 aa)) is the H15 domain. 3 stretches are compositionally biased toward basic residues: residues 145–171 (KVKKTIAKKPKVASATKIKKPVAKTTK), 178–213 (PTKKVAAKPKAAPKPKAAPKPKVAKPKKAAAPKAKK), and 221–231 (KAAKKPSAKKA).

This sequence belongs to the histone H1/H5 family.

Its subcellular location is the nucleus. The protein resides in the chromosome. In terms of biological role, histones H1 are necessary for the condensation of nucleosome chains into higher-order structures. The sequence is that of Histone H1 from Chironomus thummi thummi (Midge).